The chain runs to 129 residues: 3-aminoacrylate deaminase RutC (129 aa).

Belongs to the RutC family.

The catalysed reaction is (Z)-3-aminoacrylate + H2O + H(+) = 3-oxopropanoate + NH4(+). In terms of biological role, involved in pyrimidine catabolism. Catalyzes the deamination of 3-aminoacrylate to malonic semialdehyde, a reaction that can also occur spontaneously. RutC may facilitate the reaction and modulate the metabolic fitness, rather than catalyzing essential functions. This is 3-aminoacrylate deaminase RutC from Caulobacter vibrioides (strain ATCC 19089 / CIP 103742 / CB 15) (Caulobacter crescentus).